The primary structure comprises 100 residues: Small ribosomal subunit protein uS14 (100 aa).

The protein belongs to the universal ribosomal protein uS14 family. Part of the 30S ribosomal subunit. Contacts proteins S3 and S10.

In terms of biological role, binds 16S rRNA, required for the assembly of 30S particles and may also be responsible for determining the conformation of the 16S rRNA at the A site. The protein is Small ribosomal subunit protein uS14 of Prochlorococcus marinus (strain MIT 9215).